Here is a 179-residue protein sequence, read N- to C-terminus: D-glycero-beta-D-manno-heptose-1,7-bisphosphate 7-phosphatase (179 aa).

The active-site Nucleophile is Asp-7. 2 residues coordinate Mg(2+): Asp-7 and Asp-9. Substrate is bound at residue Asp-7. Catalysis depends on Asp-9, which acts as the Proton donor. Residues 15–19 (DSDAF), 50–53 (TNQS), and Arg-57 contribute to the substrate site. Zn(2+) contacts are provided by Cys-89, His-91, Cys-97, and Cys-99. Residue Arg-100 coordinates substrate. Asp-126 lines the Mg(2+) pocket. Arg-129 serves as a coordination point for substrate.

In terms of assembly, monomer. The cofactor is Mg(2+). It depends on Zn(2+) as a cofactor.

Its subcellular location is the cytoplasm. The catalysed reaction is D-glycero-beta-D-manno-heptose 1,7-bisphosphate + H2O = D-glycero-beta-D-manno-heptose 1-phosphate + phosphate. It functions in the pathway nucleotide-sugar biosynthesis; ADP-L-glycero-beta-D-manno-heptose biosynthesis; ADP-L-glycero-beta-D-manno-heptose from D-glycero-beta-D-manno-heptose 7-phosphate: step 2/4. It participates in bacterial outer membrane biogenesis; LPS core biosynthesis. In terms of biological role, converts the D-glycero-beta-D-manno-heptose 1,7-bisphosphate (beta-HBP) intermediate into D-glycero-beta-D-manno-heptose 1-phosphate by removing the phosphate group at the C-7 position. This Bordetella bronchiseptica (strain ATCC BAA-588 / NCTC 13252 / RB50) (Alcaligenes bronchisepticus) protein is D-glycero-beta-D-manno-heptose-1,7-bisphosphate 7-phosphatase.